Reading from the N-terminus, the 450-residue chain is Methionine aminopeptidase 2 (450 aa).

A disordered region spans residues 1–99 (MAVQAPEVDK…LFPNSQYPEG (99 aa)). Over residues 33–49 (GDEDAENEESDEDDDQG) the composition is skewed to acidic residues. The segment covering 60–75 (KKKRKRKPKKKKKKGV) has biased composition (basic residues). Residue H200 coordinates substrate. Residues D220, D231, and H300 each contribute to the a divalent metal cation site. H308 contributes to the substrate binding site. A divalent metal cation contacts are provided by E336 and E431.

It belongs to the peptidase M24A family. Methionine aminopeptidase eukaryotic type 2 subfamily. Co(2+) is required as a cofactor. The cofactor is Zn(2+). Mn(2+) serves as cofactor. It depends on Fe(2+) as a cofactor.

The protein localises to the cytoplasm. It catalyses the reaction Release of N-terminal amino acids, preferentially methionine, from peptides and arylamides.. Its function is as follows. Cotranslationally removes the N-terminal methionine from nascent proteins. The N-terminal methionine is often cleaved when the second residue in the primary sequence is small and uncharged (Met-Ala-, Cys, Gly, Pro, Ser, Thr, or Val). This Uncinocarpus reesii (strain UAMH 1704) protein is Methionine aminopeptidase 2.